The sequence spans 425 residues: Dihydroorotase (425 aa).

Zn(2+) contacts are provided by H61 and H63. Residues 63–65 (HLR) and N95 contribute to the substrate site. Zn(2+)-binding residues include K146, H175, H224, and D293. The residue at position 146 (K146) is an N6-carboxylysine. D293 is an active-site residue. Substrate contacts are provided by residues H297 and 311 to 312 (PG).

Belongs to the metallo-dependent hydrolases superfamily. DHOase family. Class I DHOase subfamily. Zn(2+) is required as a cofactor.

It carries out the reaction (S)-dihydroorotate + H2O = N-carbamoyl-L-aspartate + H(+). Its pathway is pyrimidine metabolism; UMP biosynthesis via de novo pathway; (S)-dihydroorotate from bicarbonate: step 3/3. Catalyzes the reversible cyclization of carbamoyl aspartate to dihydroorotate. This Aeropyrum pernix (strain ATCC 700893 / DSM 11879 / JCM 9820 / NBRC 100138 / K1) protein is Dihydroorotase.